Consider the following 166-residue polypeptide: Regulatory protein RecX (166 aa).

It belongs to the RecX family.

Its subcellular location is the cytoplasm. Modulates RecA activity. The protein is Regulatory protein RecX of Escherichia coli O139:H28 (strain E24377A / ETEC).